The primary structure comprises 288 residues: Ninja-family protein 6 (288 aa).

Disordered stretches follow at residues 1-50 (MASR…KRPR) and 66-207 (LHAD…TRTG). Positions 12–23 (AGEGAGPPGDAG) are enriched in gly residues. Residues 76 to 86 (LPLLRTTSLPT) show a composition bias toward low complexity. Basic and acidic residues predominate over residues 91 to 103 (ERWRRREMQSRRR). The span at 131-173 (RRSNASQGSNSASTTEQGIGGSMFNQSADAKSPSTSDNRNQND) shows a compositional bias: polar residues. A compositionally biased stretch (low complexity) spans 195-207 (RLRTLGSLTTRTG).

This sequence belongs to the Ninja family.

It is found in the nucleus. The chain is Ninja-family protein 6 from Zea mays (Maize).